The sequence spans 375 residues: Peptidyl-prolyl cis-trans isomerase D (375 aa).

The region spanning 7–169 is the PPIase cyclophilin-type domain; the sequence is YFDITIANEP…QEVTISSAGV (163 aa). TPR repeat units follow at residues 217-250, 270-307, and 312-345; these read AGKL…LDVH, LPLL…PNLS, and GKAL…VPGD.

This sequence belongs to the cyclophilin-type PPIase family. PPIase D subfamily.

It is found in the cytoplasm. The catalysed reaction is [protein]-peptidylproline (omega=180) = [protein]-peptidylproline (omega=0). In terms of biological role, PPIases accelerate the folding of proteins. It catalyzes the cis-trans isomerization of proline imidic peptide bonds in oligopeptides. The polypeptide is Peptidyl-prolyl cis-trans isomerase D (CPR6) (Cryptococcus neoformans var. neoformans serotype D (strain B-3501A) (Filobasidiella neoformans)).